The chain runs to 726 residues: Sensory/regulatory protein RpfC (726 aa).

The Periplasmic portion of the chain corresponds to 1–22; sequence MKSPLPWLKRRLSGRADSEHAQ. Positions 1–22 are sensor; the sequence is MKSPLPWLKRRLSGRADSEHAQ. Residues 23–40 form a helical membrane-spanning segment; it reads NLIRIIITTLFISYLGWR. The Cytoplasmic portion of the chain corresponds to 41-51; the sequence is YQHTHGDTLMA. The chain crosses the membrane as a helical span at residues 52–72; the sequence is TWLILVGELLVSLGLMVAILL. Topologically, residues 73 to 94 are periplasmic; sequence RPQVSHTRRLIGMLLDYTCTGA. A helical transmembrane segment spans residues 95–115; the sequence is IMAIQGEPASPLYAVCMWVTI. Over 116–127 the chain is Cytoplasmic; that stretch reads GNGLRYGSNYLR. The chain crosses the membrane as a helical span at residues 128-148; the sequence is AATAMGSLCFLGAILISPYWK. Topologically, residues 149-151 are periplasmic; the sequence is ANP. A helical membrane pass occupies residues 152 to 172; that stretch reads YLSWGLLLGLIAVPLYFDSLL. The Cytoplasmic segment spans residues 173–726; it reads RAMTRAVREA…DGECSPRSNE (554 aa). The Histidine kinase domain maps to 195-417; sequence NMSHEFRTPL…VFWFELPMAI (223 aa). Residue His-198 is modified to Phosphohistidine; by autocatalysis. Residues 463-581 enclose the Response regulatory domain; it reads RMLVADDHEA…KLLDTLADLA (119 aa). Asp-512 is modified (4-aspartylphosphate). Positions 618–711 constitute an HPt domain; the sequence is GEEFERQFVR…KAGKDALDAR (94 aa). His-657 bears the Phosphohistidine mark.

In terms of assembly, at low DSF concentrations, interacts with RpfF. Autophosphorylated. Activation may require a sequential transfer of a phosphate group from a His in the primary transmitter domain, to an Asp in the receiver domain and to a His in the secondary transmitter domain.

It is found in the cell inner membrane. The enzyme catalyses ATP + protein L-histidine = ADP + protein N-phospho-L-histidine.. With respect to regulation, binding of DSF to the sensor region causes allosteric change, which facilitates RpfC autophosphorylation. Functionally, hybrid sensor kinase that regulates diverse biological functions through two distinct molecular mechanisms. At low cell density, the extracellular concentration of the diffusible signaling factor (DSF) is below a threshold, and unphosphorylated RpfC is involved in the negative regulation of DSF synthesis, via direct interaction with the DSF synthase RpfF. Interaction prevents synthesis of DSF, which remains at a basal level. This activity does not involve the phosphorelay mechanism and is not dependent on RpfG. Is also member of the two-component regulatory system RpfG/RpfC, which is involved in the perception and response to DSF, which is essential for cell-cell signaling. At high cell density, the level of extracellular DSF increases and binding of DSF to the sensor region of RpfC causes autophosphorylation of RpfC, which results in the release of RpfF and the activation of RpfG via a four-step phosphorelay. Activation of RpfG leads to the positive regulation of biofilm dispersal and the production of virulence factors. In Xanthomonas campestris pv. campestris (strain 8004), this protein is Sensory/regulatory protein RpfC (rpfC).